We begin with the raw amino-acid sequence, 278 residues long: Dermonecrotic toxin Ls4SicTox-alphaIII1ii (278 aa).

The active site involves His-5. Glu-25 and Asp-27 together coordinate Mg(2+). The active-site Nucleophile is His-40. Residues Cys-44 and Cys-50 are joined by a disulfide bond. Asp-84 is a Mg(2+) binding site.

This sequence belongs to the arthropod phospholipase D family. Class I subfamily. Mg(2+) is required as a cofactor. Expressed by the venom gland.

It localises to the secreted. It catalyses the reaction an N-(acyl)-sphingosylphosphocholine = an N-(acyl)-sphingosyl-1,3-cyclic phosphate + choline. The catalysed reaction is an N-(acyl)-sphingosylphosphoethanolamine = an N-(acyl)-sphingosyl-1,3-cyclic phosphate + ethanolamine. The enzyme catalyses a 1-acyl-sn-glycero-3-phosphocholine = a 1-acyl-sn-glycero-2,3-cyclic phosphate + choline. It carries out the reaction a 1-acyl-sn-glycero-3-phosphoethanolamine = a 1-acyl-sn-glycero-2,3-cyclic phosphate + ethanolamine. Its function is as follows. Dermonecrotic toxins cleave the phosphodiester linkage between the phosphate and headgroup of certain phospholipids (sphingolipid and lysolipid substrates), forming an alcohol (often choline) and a cyclic phosphate. This toxin acts on sphingomyelin (SM). It may also act on ceramide phosphoethanolamine (CPE), lysophosphatidylcholine (LPC) and lysophosphatidylethanolamine (LPE), but not on lysophosphatidylserine (LPS), and lysophosphatidylglycerol (LPG). It acts by transphosphatidylation, releasing exclusively cyclic phosphate products as second products. Induces dermonecrosis, hemolysis, increased vascular permeability, edema, inflammatory response, and platelet aggregation. This chain is Dermonecrotic toxin Ls4SicTox-alphaIII1ii, found in Loxosceles sp. (strain 4 GJB-2008) (Recluse spider).